Reading from the N-terminus, the 127-residue chain is Small ribosomal subunit protein uS13 (127 aa).

Residues 96–118 are compositionally biased toward basic residues; that stretch reads LPVRGQRTHTNARTRKGPKRGIV. The segment at 96–127 is disordered; sequence LPVRGQRTHTNARTRKGPKRGIVRAKPAAPAR.

It belongs to the universal ribosomal protein uS13 family. In terms of assembly, part of the 30S ribosomal subunit. Forms a loose heterodimer with protein S19. Forms two bridges to the 50S subunit in the 70S ribosome.

Its function is as follows. Located at the top of the head of the 30S subunit, it contacts several helices of the 16S rRNA. In the 70S ribosome it contacts the 23S rRNA (bridge B1a) and protein L5 of the 50S subunit (bridge B1b), connecting the 2 subunits; these bridges are implicated in subunit movement. Contacts the tRNAs in the A and P-sites. This is Small ribosomal subunit protein uS13 from Myxococcus xanthus (strain DK1622).